Consider the following 327-residue polypeptide: GTPase Obg (327 aa).

The Obg domain maps to 2 to 160; that stretch reads HLFKDSLNLI…LNLRLELSLI (159 aa). The region spanning 161 to 326 is the OBG-type G domain; that stretch reads ADVGLVGLPN…LVSEFFSLAK (166 aa). Residues 167–174, 192–196, 213–216, 280–283, and 307–309 each bind GTP; these read GLPNAGKS, FTTKI, DLPG, SKLD, and SIY. Residues S174 and T194 each coordinate Mg(2+).

Belongs to the TRAFAC class OBG-HflX-like GTPase superfamily. OBG GTPase family. As to quaternary structure, monomer. It depends on Mg(2+) as a cofactor.

It localises to the cytoplasm. In terms of biological role, an essential GTPase which binds GTP, GDP and possibly (p)ppGpp with moderate affinity, with high nucleotide exchange rates and a fairly low GTP hydrolysis rate. Plays a role in control of the cell cycle, stress response, ribosome biogenesis and in those bacteria that undergo differentiation, in morphogenesis control. This chain is GTPase Obg, found in Borrelia recurrentis (strain A1).